The primary structure comprises 143 residues: MPMHFIFSDEAVLLFDFWRVHSPTGMALSVLVVLLLAVLYEGIKVGKAKLLHKTLESLPATNSQQFILGPDQDSTGSRSTSDNRTRLRWFLCYFGQSLVHVIQVVIGYFVMLAVMSYNTWIFLGVVLGSAVGYYLAYPLLNMT.

Residues 1 to 22 (MPMHFIFSDEAVLLFDFWRVHS) are Extracellular-facing. A helical membrane pass occupies residues 23-43 (PTGMALSVLVVLLLAVLYEGI). Residues 44 to 93 (KVGKAKLLHKTLESLPATNSQQFILGPDQDSTGSRSTSDNRTRLRWFLCY) are Cytoplasmic-facing. Thr-75 carries the post-translational modification Phosphothreonine. Position 77 is a phosphoserine (Ser-77). The helical transmembrane segment at 94–114 (FGQSLVHVIQVVIGYFVMLAV) threads the bilayer. Over 115–119 (MSYNT) the chain is Extracellular. A helical membrane pass occupies residues 120–140 (WIFLGVVLGSAVGYYLAYPLL). The Cytoplasmic segment spans residues 141–143 (NMT).

Belongs to the copper transporter (Ctr) (TC 1.A.56) family. SLC31A subfamily. Oligomer. Interacts with SLC31A1; this interaction stabilizes SLC31A2 and protects it from ubiquitination and the subsequent degradation. Post-translationally, ubiquitinated; ubiquitination and the subsequent proteasomal degradation are prevent by SLC31A1 that stabilizes it.

It is found in the membrane. Its subcellular location is the cytoplasmic vesicle membrane. It localises to the late endosome membrane. The protein resides in the lysosome membrane. The protein localises to the recycling endosome membrane. Its function is as follows. Does not function as a copper(1+) importer in vivo. However, in vitro functions as a low-affinity copper(1+) importer. Regulator of SLC31A1 which facilitates the cleavage of the SLC31A1 ecto-domain or which stabilizes the truncated form of SLC31A1 (Truncated CTR1 form), thereby drives the SLC31A1 truncated form-dependent endosomal copper export and modulates the copper and cisplatin accumulation via SLC31A1. This chain is Protein SLC31A2, found in Mus musculus (Mouse).